A 183-amino-acid polypeptide reads, in one-letter code: ATP synthase subunit delta (183 aa).

It belongs to the ATPase delta chain family. F-type ATPases have 2 components, F(1) - the catalytic core - and F(0) - the membrane proton channel. F(1) has five subunits: alpha(3), beta(3), gamma(1), delta(1), epsilon(1). F(0) has three main subunits: a(1), b(2) and c(10-14). The alpha and beta chains form an alternating ring which encloses part of the gamma chain. F(1) is attached to F(0) by a central stalk formed by the gamma and epsilon chains, while a peripheral stalk is formed by the delta and b chains.

It localises to the cell inner membrane. Functionally, f(1)F(0) ATP synthase produces ATP from ADP in the presence of a proton or sodium gradient. F-type ATPases consist of two structural domains, F(1) containing the extramembraneous catalytic core and F(0) containing the membrane proton channel, linked together by a central stalk and a peripheral stalk. During catalysis, ATP synthesis in the catalytic domain of F(1) is coupled via a rotary mechanism of the central stalk subunits to proton translocation. Its function is as follows. This protein is part of the stalk that links CF(0) to CF(1). It either transmits conformational changes from CF(0) to CF(1) or is implicated in proton conduction. This chain is ATP synthase subunit delta, found in Rickettsia prowazekii (strain Madrid E).